Consider the following 231-residue polypeptide: Flagellar L-ring protein (231 aa).

An N-terminal signal peptide occupies residues 1–18; that stretch reads MNRFICVLALSGSAVLAG. The N-palmitoyl cysteine moiety is linked to residue cysteine 19. Cysteine 19 carries S-diacylglycerol cysteine lipidation.

This sequence belongs to the FlgH family. In terms of assembly, the basal body constitutes a major portion of the flagellar organelle and consists of four rings (L,P,S, and M) mounted on a central rod.

The protein localises to the cell outer membrane. It localises to the bacterial flagellum basal body. Assembles around the rod to form the L-ring and probably protects the motor/basal body from shearing forces during rotation. In Pseudomonas fluorescens (strain ATCC BAA-477 / NRRL B-23932 / Pf-5), this protein is Flagellar L-ring protein.